A 140-amino-acid chain; its full sequence is Large ribosomal subunit protein uL11 (140 aa).

The protein belongs to the universal ribosomal protein uL11 family. In terms of assembly, part of the ribosomal stalk of the 50S ribosomal subunit. Interacts with L10 and the large rRNA to form the base of the stalk. L10 forms an elongated spine to which L12 dimers bind in a sequential fashion forming a multimeric L10(L12)X complex. Post-translationally, one or more lysine residues are methylated.

Functionally, forms part of the ribosomal stalk which helps the ribosome interact with GTP-bound translation factors. This is Large ribosomal subunit protein uL11 from Dehalococcoides mccartyi (strain CBDB1).